Here is a 151-residue protein sequence, read N- to C-terminus: 3-hydroxyacyl-[acyl-carrier-protein] dehydratase FabZ (151 aa).

Histidine 54 is an active-site residue.

This sequence belongs to the thioester dehydratase family. FabZ subfamily.

Its subcellular location is the cytoplasm. It catalyses the reaction a (3R)-hydroxyacyl-[ACP] = a (2E)-enoyl-[ACP] + H2O. Functionally, involved in unsaturated fatty acids biosynthesis. Catalyzes the dehydration of short chain beta-hydroxyacyl-ACPs and long chain saturated and unsaturated beta-hydroxyacyl-ACPs. The chain is 3-hydroxyacyl-[acyl-carrier-protein] dehydratase FabZ from Cronobacter sakazakii (strain ATCC BAA-894) (Enterobacter sakazakii).